Reading from the N-terminus, the 985-residue chain is Alanine--tRNA ligase, mitochondrial (985 aa).

The transit peptide at 1-23 (MAASVAAAARRLRRAIRRSPAWR) directs the protein to the mitochondrion. ATP contacts are provided by residues arginine 110, histidine 128, tryptophan 210, and 240–242 (LWN). L-alanine-binding residues include asparagine 242 and aspartate 265. Position 269 (glycine 269) interacts with ATP. Zn(2+) is bound by residues histidine 632, histidine 636, cysteine 749, and histidine 753.

Belongs to the class-II aminoacyl-tRNA synthetase family. As to quaternary structure, monomer. Zn(2+) serves as cofactor.

It localises to the mitochondrion. The enzyme catalyses tRNA(Ala) + L-alanine + ATP = L-alanyl-tRNA(Ala) + AMP + diphosphate. It catalyses the reaction (S)-lactate + ATP + H(+) = (S)-lactoyl-AMP + diphosphate. It carries out the reaction (S)-lactoyl-AMP + L-lysyl-[protein] = N(6)-[(S)-lactoyl]-L-lysyl-[protein] + AMP + 2 H(+). Catalyzes the attachment of alanine to tRNA(Ala) in a two-step reaction: alanine is first activated by ATP to form Ala-AMP and then transferred to the acceptor end of tRNA(Ala). Also edits incorrectly charged tRNA(Ala) via its editing domain. In presence of high levels of lactate, also acts as a protein lactyltransferase that mediates lactylation of lysine residues in target proteins, such as CGAS. Acts as an inhibitor of cGAS/STING signaling by catalyzing lactylation of CGAS, preventing the formation of liquid-like droplets in which CGAS is activated. This is Alanine--tRNA ligase, mitochondrial from Homo sapiens (Human).